We begin with the raw amino-acid sequence, 1176 residues long: Growth-differentiation transition protein 5 (1176 aa).

Positions 1–25 are cleaved as a signal peptide; the sequence is MKNNFFKKTIILLIFLSIFILYSNA. The Extracellular portion of the chain corresponds to 26-913; the sequence is DEETITTPPG…DVPANENTLN (888 aa). The chain crosses the membrane as a helical span at residues 914-934; sequence LLTIVLPICSAVVVASSVMLG. Over 935-1176 the chain is Cytoplasmic; that stretch reads RLFYKKKFKK…NVGYNVHEYF (242 aa). Low complexity-rich tracts occupy residues 965-974 and 1053-1066; these read SNIENKSESI and PQISPDSPQHSIPS. Disordered regions lie at residues 965 to 985 and 1050 to 1080; these read SNIENKSESIATPQQRNEQKE and VDTPQISPDSPQHSIPSSSPPPPPLPLPPST. A compositionally biased stretch (pro residues) spans 1067–1078; the sequence is SSPPPPPLPLPP.

This sequence belongs to the GDT family.

The protein localises to the membrane. In Dictyostelium discoideum (Social amoeba), this protein is Growth-differentiation transition protein 5 (gdt5).